The following is a 99-amino-acid chain: Large ribosomal subunit protein uL23cz/uL23cy (99 aa).

The interval 1-37 is disordered; that stretch reads MGGVENPVSTDKAIRLPERKQYSSNAEPNPSKTEVKR. Basic and acidic residues predominate over residues 12–21; that stretch reads KAIRLPERKQ. Residues 22-32 are compositionally biased toward polar residues; the sequence is YSSNAEPNPSK.

It belongs to the universal ribosomal protein uL23 family. As to quaternary structure, part of the 50S ribosomal subunit.

It is found in the plastid. It localises to the chloroplast. Its function is as follows. Binds to 23S rRNA. The protein is Large ribosomal subunit protein uL23cz/uL23cy (rpl23-A) of Selaginella uncinata (Blue spike-moss).